A 132-amino-acid polypeptide reads, in one-letter code: Small ribosomal subunit protein uS11 (132 aa).

Positions Met1–Arg16 are enriched in basic residues. Positions Met1–Glu20 are disordered.

This sequence belongs to the universal ribosomal protein uS11 family. As to quaternary structure, part of the 30S ribosomal subunit. Interacts with proteins S7 and S18. Binds to IF-3.

Functionally, located on the platform of the 30S subunit, it bridges several disparate RNA helices of the 16S rRNA. Forms part of the Shine-Dalgarno cleft in the 70S ribosome. This is Small ribosomal subunit protein uS11 from Clostridium botulinum (strain Hall / ATCC 3502 / NCTC 13319 / Type A).